The following is a 416-amino-acid chain: Glutamyl-tRNA reductase (416 aa).

Substrate-binding positions include 49 to 52 (TCNR), serine 105, 110 to 112 (EPQ), and glutamine 116. Cysteine 50 serves as the catalytic Nucleophile. 185–190 (GAGETI) contacts NADP(+).

Belongs to the glutamyl-tRNA reductase family. As to quaternary structure, homodimer.

The catalysed reaction is (S)-4-amino-5-oxopentanoate + tRNA(Glu) + NADP(+) = L-glutamyl-tRNA(Glu) + NADPH + H(+). The protein operates within porphyrin-containing compound metabolism; protoporphyrin-IX biosynthesis; 5-aminolevulinate from L-glutamyl-tRNA(Glu): step 1/2. In terms of biological role, catalyzes the NADPH-dependent reduction of glutamyl-tRNA(Glu) to glutamate 1-semialdehyde (GSA). This Shewanella sp. (strain MR-7) protein is Glutamyl-tRNA reductase.